A 90-amino-acid polypeptide reads, in one-letter code: DNA-directed RNA polymerase subunit omega (90 aa).

This sequence belongs to the RNA polymerase subunit omega family. The RNAP catalytic core consists of 2 alpha, 1 beta, 1 beta' and 1 omega subunit. When a sigma factor is associated with the core the holoenzyme is formed, which can initiate transcription.

The catalysed reaction is RNA(n) + a ribonucleoside 5'-triphosphate = RNA(n+1) + diphosphate. Its function is as follows. Promotes RNA polymerase assembly. Latches the N- and C-terminal regions of the beta' subunit thereby facilitating its interaction with the beta and alpha subunits. The sequence is that of DNA-directed RNA polymerase subunit omega (rpoZ) from Streptomyces coelicolor (strain ATCC BAA-471 / A3(2) / M145).